Here is a 504-residue protein sequence, read N- to C-terminus: Diacylglycerol O-acyltransferase 1B (504 aa).

The segment at 1–72 (MAISDEPESV…VNSQQQNEKQ (72 aa)) is disordered. Positions 24–41 (SATSTAGLFNSPETTTDS) are enriched in polar residues. Low complexity predominate over residues 53–65 (DDSINSDDAAVNS). Transmembrane regions (helical) follow at residues 108–128 (HAGL…RLII), 152–172 (WPLF…FIVE), 184–204 (VVVV…VLVI), 209–229 (SAFV…LKLV), 259–279 (YPYN…TLCY), 301–321 (LIIF…PIVQ), and 348–368 (VWLC…AELL). The FYXDWWN motif signature appears at 375–381 (FYKDWWN). 3 helical membrane passes run 416–436 (AAAL…CIAV), 438–458 (CHIF…LVLI), and 471–491 (VGNM…CVLL). His-430 is an active-site residue.

Belongs to the membrane-bound acyltransferase family. Sterol o-acyltransferase subfamily. Highly expressed in flowers and pods. Expressed at low levels in roots, stems and leaves.

The protein resides in the endoplasmic reticulum membrane. The catalysed reaction is an acyl-CoA + a 1,2-diacyl-sn-glycerol = a triacyl-sn-glycerol + CoA. It participates in glycerolipid metabolism; triacylglycerol biosynthesis. Functionally, major contributors to triacylglycerol (TAG) synthesis and oil accumulation in developing seeds. Catalyzes the acylation of the sn-3 hydroxy group of sn-1,2-diacylglycerol using acyl-CoA. Has a marked preference for oleoyl-CoA and sn-1,2-dioleoylglycerol over vernoloyl-CoA and sn-1,2-divernoloylglycerol. In Glycine max (Soybean), this protein is Diacylglycerol O-acyltransferase 1B.